The sequence spans 445 residues: Glutamate--tRNA ligase 1 (445 aa).

Residues 10–20 carry the 'HIGH' region motif; that stretch reads PSPTGMLHVGN. The 'KMSKS' region motif lies at 240–244; sequence KISKR. ATP is bound at residue K243.

It belongs to the class-I aminoacyl-tRNA synthetase family. Glutamate--tRNA ligase type 1 subfamily. In terms of assembly, monomer.

It is found in the cytoplasm. The enzyme catalyses tRNA(Glu) + L-glutamate + ATP = L-glutamyl-tRNA(Glu) + AMP + diphosphate. Functionally, catalyzes the attachment of glutamate to tRNA(Glu) in a two-step reaction: glutamate is first activated by ATP to form Glu-AMP and then transferred to the acceptor end of tRNA(Glu). The polypeptide is Glutamate--tRNA ligase 1 (Rickettsia bellii (strain OSU 85-389)).